Here is a 127-residue protein sequence, read N- to C-terminus: ATP synthase epsilon chain (127 aa).

It belongs to the ATPase epsilon chain family. As to quaternary structure, F-type ATPases have 2 components, CF(1) - the catalytic core - and CF(0) - the membrane proton channel. CF(1) has five subunits: alpha(3), beta(3), gamma(1), delta(1), epsilon(1). CF(0) has three main subunits: a, b and c.

The protein localises to the cell inner membrane. Its function is as follows. Produces ATP from ADP in the presence of a proton gradient across the membrane. In Leptospira interrogans serogroup Icterohaemorrhagiae serovar copenhageni (strain Fiocruz L1-130), this protein is ATP synthase epsilon chain.